We begin with the raw amino-acid sequence, 400 residues long: Bifunctional arginine demethylase and lysyl-hydroxylase psr-1 (400 aa).

One can recognise a JmjC domain in the interval 146–310; it reads RKTKKLSEDY…LVWPKTVKGR (165 aa). Threonine 189 provides a ligand contact to substrate. Fe cation is bound by residues histidine 192 and aspartate 194. Position 202 (asparagine 202) interacts with 2-oxoglutarate. Lysine 209 lines the substrate pocket. Residue histidine 278 participates in Fe cation binding. Threonine 290 contacts 2-oxoglutarate. The interval 342–400 is disordered; it reads DMNESSSDSSSSSSSSDDSSDESDCDDSGRCGGRKRKNDDRSNECPEKMSTTYFQNSLV. Low complexity predominate over residues 346 to 358; sequence SSSDSSSSSSSSD. Positions 378–388 are enriched in basic and acidic residues; it reads KNDDRSNECPE. Over residues 390-400 the composition is skewed to polar residues; that stretch reads MSTTYFQNSLV.

It belongs to the JMJD6 family. In terms of assembly, interacts with ced-5 and ced-12. It depends on Fe(2+) as a cofactor.

Its subcellular location is the nucleus. Functionally, dioxygenase that can both act as a histone arginine demethylase and a lysyl-hydroxylase. The sequence is that of Bifunctional arginine demethylase and lysyl-hydroxylase psr-1 (psr-1) from Caenorhabditis elegans.